The primary structure comprises 174 residues: Large ribosomal subunit protein uL10 (174 aa).

It belongs to the universal ribosomal protein uL10 family. In terms of assembly, part of the ribosomal stalk of the 50S ribosomal subunit. The N-terminus interacts with L11 and the large rRNA to form the base of the stalk. The C-terminus forms an elongated spine to which L12 dimers bind in a sequential fashion forming a multimeric L10(L12)X complex.

Forms part of the ribosomal stalk, playing a central role in the interaction of the ribosome with GTP-bound translation factors. The protein is Large ribosomal subunit protein uL10 of Rubrobacter xylanophilus (strain DSM 9941 / JCM 11954 / NBRC 16129 / PRD-1).